A 704-amino-acid chain; its full sequence is Seven transmembrane domain-containing serine/threonine-protein kinase 2 (704 aa).

Residues 1 to 5 are Extracellular-facing; it reads MPSKE. The chain crosses the membrane as a helical span at residues 6–26; it reads FIIPLILLCFYSVNGFVAVIS. The Cytoplasmic portion of the chain corresponds to 27-42; that stretch reads SLVELFIHKASWNSIK. The helical transmembrane segment at 43–63 threads the bilayer; the sequence is IFFYSLLILQCLCRCIIIGWG. Residues 64 to 76 are Extracellular-facing; it reads MIETVQGGEFYSN. The chain crosses the membrane as a helical span at residues 77 to 97; it reads FPSLLFISYAGLVALQMIQFL. Residues 98–121 are Cytoplasmic-facing; it reads PNDNQYLLLSEGKKNNHKVKVGTN. The chain crosses the membrane as a helical span at residues 122-142; it reads ILIFFNLFMYFGMFLLFGIAE. The Extracellular portion of the chain corresponds to 143 to 185; the sequence is KQVGNSTSFNHHGNHNSTTSTSTDEIPLVSTEVGELYLFGDKD. N-linked (GlcNAc...) asparagine glycosylation is found at Asn147 and Asn158. The chain crosses the membrane as a helical span at residues 186 to 206; the sequence is PIYIVLDCFYFVCLLLLLIFH. The Cytoplasmic portion of the chain corresponds to 207-224; the sequence is SYVGWKTYKRNKDLFGIK. A helical transmembrane segment spans residues 225–245; sequence LNVIHLILLICIFIRSLLVII. Over 246–265 the chain is Extracellular; sequence DPSSPNNSILHIDTESWLIY. The N-linked (GlcNAc...) asparagine glycan is linked to Asn251. A helical transmembrane segment spans residues 266-286; it reads IYTISYYVVGEIIPGMLLIVI. At 287 to 704 the chain is on the cytoplasmic side; that stretch reads EFLLPYHKRK…WSIEKDSSSK (418 aa). The Protein kinase domain maps to 317-682; the sequence is IAIHELLGMG…SLGVKFHLAN (366 aa). ATP is bound by residues 323 to 331 and Lys350; that span reads LGMGGSGAM. Catalysis depends on Asp506, which acts as the Proton acceptor.

Belongs to the protein kinase superfamily. Ser/Thr protein kinase family.

It localises to the membrane. It carries out the reaction L-seryl-[protein] + ATP = O-phospho-L-seryl-[protein] + ADP + H(+). It catalyses the reaction L-threonyl-[protein] + ATP = O-phospho-L-threonyl-[protein] + ADP + H(+). The sequence is that of Seven transmembrane domain-containing serine/threonine-protein kinase 2 (7tmk2) from Dictyostelium discoideum (Social amoeba).